The following is a 395-amino-acid chain: MVEERKPHINVGTIGHVDHGKTTLTAALTTVLAKRLSGEGNKSVKYDEIDKAPEEKARGITISTAHVEYETENRHYAHVDCPGHADYIKNMITGAAQMDAAILVVSATDGAMPQTREHILLAKQVGVKDIVVWMNKCDVVDDEEMLSLVEMEIRELLSKYGYPGDDIDVVRGSAVKALEEETGSGVWSEKIMELMNALEKISLPTREKDKPFLMSIEDVFSIPGRGTVVTGRIERGVIRVGDKIEIVGLRDIQSTVCTGVEMFHKALDAGEAGDNAGILLRGIKKEDVERGQVLSAPGQIHSYKKFKAEVYILKKEEGGRHTPFFSNYQPQFYVRTTDVTGSIKLPEGVEMVMPGDNISIEVSLDKPVAIDKGLRFAIREGGRTVGSGIITEILE.

One can recognise a tr-type G domain in the interval 6 to 205; that stretch reads KPHINVGTIG…NALEKISLPT (200 aa). Positions 15 to 22 are G1; the sequence is GHVDHGKT. 15–22 lines the GTP pocket; sequence GHVDHGKT. Position 22 (threonine 22) interacts with Mg(2+). A G2 region spans residues 59-63; that stretch reads GITIS. The interval 80-83 is G3; the sequence is DCPG. Residues 80-84 and 135-138 contribute to the GTP site; these read DCPGH and NKCD. The segment at 135-138 is G4; sequence NKCD. Positions 173–175 are G5; it reads SAV.

This sequence belongs to the TRAFAC class translation factor GTPase superfamily. Classic translation factor GTPase family. EF-Tu/EF-1A subfamily. As to quaternary structure, monomer.

The protein localises to the cytoplasm. The enzyme catalyses GTP + H2O = GDP + phosphate + H(+). In terms of biological role, GTP hydrolase that promotes the GTP-dependent binding of aminoacyl-tRNA to the A-site of ribosomes during protein biosynthesis. This chain is Elongation factor Tu, found in Ehrlichia chaffeensis (strain ATCC CRL-10679 / Arkansas).